The primary structure comprises 563 residues: Dihydroxy-acid dehydratase (563 aa).

Residue aspartate 78 coordinates Mg(2+). Cysteine 119 lines the [2Fe-2S] cluster pocket. Mg(2+) is bound by residues aspartate 120 and lysine 121. Lysine 121 carries the N6-carboxylysine modification. Cysteine 191 contributes to the [2Fe-2S] cluster binding site. Position 442 (glutamate 442) interacts with Mg(2+). Catalysis depends on serine 468, which acts as the Proton acceptor.

The protein belongs to the IlvD/Edd family. In terms of assembly, homodimer. It depends on [2Fe-2S] cluster as a cofactor. Mg(2+) serves as cofactor.

The enzyme catalyses (2R)-2,3-dihydroxy-3-methylbutanoate = 3-methyl-2-oxobutanoate + H2O. The catalysed reaction is (2R,3R)-2,3-dihydroxy-3-methylpentanoate = (S)-3-methyl-2-oxopentanoate + H2O. The protein operates within amino-acid biosynthesis; L-isoleucine biosynthesis; L-isoleucine from 2-oxobutanoate: step 3/4. It functions in the pathway amino-acid biosynthesis; L-valine biosynthesis; L-valine from pyruvate: step 3/4. Functions in the biosynthesis of branched-chain amino acids. Catalyzes the dehydration of (2R,3R)-2,3-dihydroxy-3-methylpentanoate (2,3-dihydroxy-3-methylvalerate) into 2-oxo-3-methylpentanoate (2-oxo-3-methylvalerate) and of (2R)-2,3-dihydroxy-3-methylbutanoate (2,3-dihydroxyisovalerate) into 2-oxo-3-methylbutanoate (2-oxoisovalerate), the penultimate precursor to L-isoleucine and L-valine, respectively. The sequence is that of Dihydroxy-acid dehydratase from Desulfitobacterium hafniense (strain DSM 10664 / DCB-2).